Consider the following 264-residue polypeptide: MDGLWVKCKQCQQILLTKELEKNLKVCRCGYHFRMTAQERIVMLVDENSFIEWDRELVSKDPLQFPGYAQKIQKCQIETSMSEAITTGQGRICDIPVVLGVMDPRFIMASMGAVVGEKIVRAAERALKLRLPLVLFSASGGARMQEGVLSLMQMARTSAALTRLSKAGLPFFSVLTDPTTGGVTASFAMLGDLIIAEPGALIGFTGPRVIEQTIRQKLPEGFQRSEFLQKHGMVDIIIERPKMREQLAALLALHCGNSLEGVES.

The CoA carboxyltransferase N-terminal domain occupies 4–264 (LWVKCKQCQQ…CGNSLEGVES (261 aa)). Positions 8, 11, 27, and 29 each coordinate Zn(2+). The C4-type zinc finger occupies 8–29 (CKQCQQILLTKELEKNLKVCRC).

Belongs to the AccD/PCCB family. Acetyl-CoA carboxylase is a heterohexamer composed of biotin carboxyl carrier protein (AccB), biotin carboxylase (AccC) and two subunits each of ACCase subunit alpha (AccA) and ACCase subunit beta (AccD). Zn(2+) serves as cofactor.

It localises to the cytoplasm. The enzyme catalyses N(6)-carboxybiotinyl-L-lysyl-[protein] + acetyl-CoA = N(6)-biotinyl-L-lysyl-[protein] + malonyl-CoA. Its pathway is lipid metabolism; malonyl-CoA biosynthesis; malonyl-CoA from acetyl-CoA: step 1/1. In terms of biological role, component of the acetyl coenzyme A carboxylase (ACC) complex. Biotin carboxylase (BC) catalyzes the carboxylation of biotin on its carrier protein (BCCP) and then the CO(2) group is transferred by the transcarboxylase to acetyl-CoA to form malonyl-CoA. This Heliobacterium modesticaldum (strain ATCC 51547 / Ice1) protein is Acetyl-coenzyme A carboxylase carboxyl transferase subunit beta.